Consider the following 257-residue polypeptide: uncharacterized protein (257 aa).

Residues 1 to 22 form the signal peptide; sequence MGYLKRFALYISVMILIFAIAG. Cys-23 is lipidated: N-palmitoyl cysteine. Cys-23 is lipidated: S-diacylglycerol cysteine.

The protein belongs to the staphylococcal tandem lipoprotein family.

The protein resides in the cell membrane. This is an uncharacterized protein from Staphylococcus aureus (strain USA300).